A 452-amino-acid polypeptide reads, in one-letter code: Lysine-rich nucleolar protein 1 (452 aa).

Disordered regions lie at residues 1 to 28 (MITKAHKGEVGLGLPEKKKKKKKVVKEP), 55 to 161 (VIQE…AFSG), and 184 to 305 (REQA…PDTD). K7 is covalently cross-linked (Glycyl lysine isopeptide (Lys-Gly) (interchain with G-Cter in SUMO2)). Basic residues predominate over residues 65 to 75 (LVKKKKKKKGH). Residues 78–98 (ICEEHLEPEITLRAGRTERSH) show a composition bias toward basic and acidic residues. S112 carries the phosphoserine modification. K126 participates in a covalent cross-link: Glycyl lysine isopeptide (Lys-Gly) (interchain with G-Cter in SUMO2). The span at 127 to 139 (TSPDPRQDEEVTR) shows a compositional bias: basic and acidic residues. Residue S128 is modified to Phosphoserine. Basic residues-rich tracts occupy residues 140–151 (VGKKLKKHKKEK) and 258–267 (SVKKKVKSKK). S258 carries the post-translational modification Phosphoserine. A Glycyl lysine isopeptide (Lys-Gly) (interchain with G-Cter in SUMO2) cross-link involves residue K280. The segment covering 293–305 (VAEEPWEEEPDTD) has biased composition (acidic residues). An interaction with ZNF106 region spans residues 300–452 (EEPDTDLEVV…NASKSIKFED (153 aa)). T304 carries the post-translational modification Phosphothreonine. Glycyl lysine isopeptide (Lys-Gly) (interchain with G-Cter in SUMO2) cross-links involve residues K313, K347, K367, K369, and K401. Residue R424 is modified to Omega-N-methylarginine. K436 is covalently cross-linked (Glycyl lysine isopeptide (Lys-Gly) (interchain with G-Cter in SUMO2)).

In terms of assembly, interacts with ZNF106.

Its subcellular location is the nucleus. It is found in the nucleolus. This Bos taurus (Bovine) protein is Lysine-rich nucleolar protein 1 (KNOP1).